The primary structure comprises 140 residues: Putative nickel-responsive regulator 2 (140 aa).

Ni(2+)-binding residues include His81, His92, His94, and Cys100.

The protein belongs to the transcriptional regulatory CopG/NikR family. The cofactor is Ni(2+).

In terms of biological role, transcriptional regulator. The chain is Putative nickel-responsive regulator 2 from Methanosarcina mazei (strain ATCC BAA-159 / DSM 3647 / Goe1 / Go1 / JCM 11833 / OCM 88) (Methanosarcina frisia).